Reading from the N-terminus, the 556-residue chain is 2-succinyl-5-enolpyruvyl-6-hydroxy-3-cyclohexene-1-carboxylate synthase (556 aa).

The protein belongs to the TPP enzyme family. MenD subfamily. Homodimer. Mg(2+) serves as cofactor. Requires Mn(2+) as cofactor. Thiamine diphosphate is required as a cofactor.

The enzyme catalyses isochorismate + 2-oxoglutarate + H(+) = 5-enolpyruvoyl-6-hydroxy-2-succinyl-cyclohex-3-ene-1-carboxylate + CO2. Its pathway is quinol/quinone metabolism; 1,4-dihydroxy-2-naphthoate biosynthesis; 1,4-dihydroxy-2-naphthoate from chorismate: step 2/7. It functions in the pathway quinol/quinone metabolism; menaquinone biosynthesis. Its function is as follows. Catalyzes the thiamine diphosphate-dependent decarboxylation of 2-oxoglutarate and the subsequent addition of the resulting succinic semialdehyde-thiamine pyrophosphate anion to isochorismate to yield 2-succinyl-5-enolpyruvyl-6-hydroxy-3-cyclohexene-1-carboxylate (SEPHCHC). The polypeptide is 2-succinyl-5-enolpyruvyl-6-hydroxy-3-cyclohexene-1-carboxylate synthase (Escherichia coli (strain SMS-3-5 / SECEC)).